The following is a 178-amino-acid chain: Large ribosomal subunit protein uL6 (178 aa).

It belongs to the universal ribosomal protein uL6 family. Part of the 50S ribosomal subunit.

Its function is as follows. This protein binds to the 23S rRNA, and is important in its secondary structure. It is located near the subunit interface in the base of the L7/L12 stalk, and near the tRNA binding site of the peptidyltransferase center. The chain is Large ribosomal subunit protein uL6 from Streptococcus suis (strain 05ZYH33).